The chain runs to 311 residues: Aquaporin NIP3-1 (311 aa).

The tract at residues 1–34 (MEMAAPNGGGAAGMSSPVNGASAPATPGTPAPLF) is disordered. Low complexity predominate over residues 20 to 34 (GASAPATPGTPAPLF). Transmembrane regions (helical) follow at residues 85 to 105 (LGAE…APIV) and 111 to 131 (GAIS…TIIL). Positions 142–144 (NPS) match the NPA 1 motif. Helical transmembrane passes span 158–178 (LQVP…GFAL), 202–222 (AFFT…AVAT), and 226–246 (AVGE…ILIA). The NPA 2 signature appears at 255 to 257 (NPV). The chain crosses the membrane as a helical span at residues 273–293 (WIYLIAPTLGAVAGAGVYTAV).

It belongs to the MIP/aquaporin (TC 1.A.8) family. NIP (TC 1.A.8.12) subfamily. Expressed in roots and leaves.

The protein localises to the membrane. Aquaporins facilitate the transport of water and small neutral solutes across cell membranes. This Oryza sativa subsp. japonica (Rice) protein is Aquaporin NIP3-1 (NIP3-1).